A 248-amino-acid chain; its full sequence is 2,3-bisphosphoglycerate-dependent phosphoglycerate mutase (248 aa).

Substrate-binding positions include 8–15, 21–22, R60, 87–90, K98, 114–115, and 183–184; these read RHGESTWN, TG, ERHY, RR, and GN. The Tele-phosphohistidine intermediate role is filled by H9. E87 functions as the Proton donor/acceptor in the catalytic mechanism.

The protein belongs to the phosphoglycerate mutase family. BPG-dependent PGAM subfamily. Homodimer.

It carries out the reaction (2R)-2-phosphoglycerate = (2R)-3-phosphoglycerate. The protein operates within carbohydrate degradation; glycolysis; pyruvate from D-glyceraldehyde 3-phosphate: step 3/5. Its function is as follows. Catalyzes the interconversion of 2-phosphoglycerate and 3-phosphoglycerate. The chain is 2,3-bisphosphoglycerate-dependent phosphoglycerate mutase from Burkholderia orbicola (strain MC0-3).